The chain runs to 249 residues: Exosome complex component Rrp41 (249 aa).

It belongs to the RNase PH family. Rrp41 subfamily. Component of the archaeal exosome complex. Forms a hexameric ring-like arrangement composed of 3 Rrp41-Rrp42 heterodimers. The hexameric ring associates with a trimer of Rrp4 and/or Csl4 subunits.

The protein localises to the cytoplasm. In terms of biological role, catalytic component of the exosome, which is a complex involved in RNA degradation. Has 3'-&gt;5' exoribonuclease activity. Can also synthesize heteromeric RNA-tails. The polypeptide is Exosome complex component Rrp41 (Thermococcus gammatolerans (strain DSM 15229 / JCM 11827 / EJ3)).